The chain runs to 425 residues: Histidine--tRNA ligase (425 aa).

Belongs to the class-II aminoacyl-tRNA synthetase family. Homodimer.

The protein localises to the cytoplasm. It catalyses the reaction tRNA(His) + L-histidine + ATP = L-histidyl-tRNA(His) + AMP + diphosphate + H(+). The sequence is that of Histidine--tRNA ligase from Shewanella sp. (strain MR-4).